The following is a 254-amino-acid chain: Leucyl/phenylalanyl-tRNA--protein transferase (254 aa).

Belongs to the L/F-transferase family.

Its subcellular location is the cytoplasm. It carries out the reaction N-terminal L-lysyl-[protein] + L-leucyl-tRNA(Leu) = N-terminal L-leucyl-L-lysyl-[protein] + tRNA(Leu) + H(+). The enzyme catalyses N-terminal L-arginyl-[protein] + L-leucyl-tRNA(Leu) = N-terminal L-leucyl-L-arginyl-[protein] + tRNA(Leu) + H(+). It catalyses the reaction L-phenylalanyl-tRNA(Phe) + an N-terminal L-alpha-aminoacyl-[protein] = an N-terminal L-phenylalanyl-L-alpha-aminoacyl-[protein] + tRNA(Phe). Functions in the N-end rule pathway of protein degradation where it conjugates Leu, Phe and, less efficiently, Met from aminoacyl-tRNAs to the N-termini of proteins containing an N-terminal arginine or lysine. The chain is Leucyl/phenylalanyl-tRNA--protein transferase from Burkholderia orbicola (strain MC0-3).